The sequence spans 488 residues: Dipeptide and tripeptide permease B (488 aa).

Over 1–27 (MSKTASVGLWDQPKPFFMIFFVELWER) the chain is Cytoplasmic. The helical transmembrane segment at 28 to 48 (FGFYGVQGILAIYFVQQLGFS) threads the bilayer. Topologically, residues 49–52 (EEQS) are periplasmic. A helical membrane pass occupies residues 53-73 (FITFGAFTALVYGLISVGGYV). Topologically, residues 74 to 82 (GDHILGTKR) are cytoplasmic. Residues 83 to 103 (TIVLGAIVMAIGYYMIGLSIM) form a helical membrane-spanning segment. At 104–106 (KPE) the chain is on the periplasmic side. A helical membrane pass occupies residues 107 to 127 (LIFYALGTVAVGNGLFKANPA). Residues 128–146 (SLLAKCYQPQDPRLDGAFT) lie on the Cytoplasmic side of the membrane. The chain crosses the membrane as a helical span at residues 147–167 (LFYMSINLGSLFSLSLAPVIA). Topologically, residues 168–172 (EKYGY) are periplasmic. The helical transmembrane segment at 173–193 (TVTYNICGIGLIIALLVYIAC) threads the bilayer. At 194-211 (RRMVHNIGSAPDHHPVKP) the chain is on the cytoplasmic side. The chain crosses the membrane as a helical span at residues 212 to 232 (IGLIAVLIGSVVMVGVCAWLL). The Periplasmic segment spans residues 233–234 (HN). The chain crosses the membrane as a helical span at residues 235–255 (IKVANIALFAITTIVVLIFFW). Over 256–267 (QAFKQNRVGRNK) the chain is Cytoplasmic. The helical transmembrane segment at 268-288 (MFVAFILMLQAVVFFILYNQM) threads the bilayer. Residues 289–311 (PMSLNFFAINNVHHQILGFDVNP) are Periplasmic-facing. Residues 312-332 (VSFQAFNPFWIIIVSPILAVV) traverse the membrane as a helical segment. Residues 333–348 (YTKLGAKGKDFSMPAK) lie on the Cytoplasmic side of the membrane. The chain crosses the membrane as a helical span at residues 349-369 (FTFGMFLCSLGFLTAAASGLF). The Periplasmic portion of the chain corresponds to 370–378 (ADAQGITSP). Residues 379–399 (WFIVLVYLFQSVGELMISALG) form a helical membrane-spanning segment. The Cytoplasmic segment spans residues 400–423 (LAMVAAFVPSYLTGFILGMWFLSQ). A helical membrane pass occupies residues 424 to 444 (AVASMLASHVAALTATPVGVT). The Periplasmic portion of the chain corresponds to 445-455 (DPLQTLPIYMS). A helical transmembrane segment spans residues 456–476 (VFGKIGVATLIVAIIMTFMVP). At 477–488 (WLNRIMREEVKA) the chain is on the cytoplasmic side.

It belongs to the major facilitator superfamily. Proton-dependent oligopeptide transporter (POT/PTR) (TC 2.A.17) family. DtpB subfamily.

The protein resides in the cell inner membrane. Proton-dependent permease that transports di- and tripeptides. This chain is Dipeptide and tripeptide permease B, found in Xenorhabdus bovienii (strain SS-2004) (Xenorhabdus nematophila subsp. bovienii).